The primary structure comprises 577 residues: Insulin-like growth factor 2 mRNA-binding protein 1 (577 aa).

RRM domains lie at 2–75 (NKLY…HSVP) and 81–156 (RKIQ…YIPD). Residues Ser-12 and Ser-73 each carry the phosphoserine modification. A disordered region spans residues 160–190 (AQGPENGRRGGFGSRGQPRQGSPVAAGAPAK). Ser-181 carries the post-translational modification Phosphoserine. KH domains lie at 195–260 (DIPL…CKMI), 276–343 (EVPL…EQEI), 405–470 (QEMV…QGRI), and 487–553 (KLET…QRKI). The tract at residues 310–324 (ITISSLQDLTLYNPE) is sufficient for nuclear export. The segment at 485–495 (EVKLETHIRVP) is sufficient for nuclear export. Thr-528 carries the phosphothreonine modification.

This sequence belongs to the RRM IMP/VICKZ family. Can form homodimers and heterodimers with IGF2BP1 and IGF2BP3. Component of the coding region determinant (CRD)-mediated complex, composed of DHX9, HNRNPU, IGF2BP1, SYNCRIP and YBX1. During HCV infection, identified in a HCV IRES-mediated translation complex, at least composed of EIF3C, IGF2BP1, RPS3 and HCV RNA-replicon. Interacts (via the KH domains) with HIV-1 GAG (via the second zinc finger motif of NC). Associates (via the RRM domains and KH domains) with HIV-1 particles. Identified in a mRNP complex, composed of at least DHX9, DDX3X, ELAVL1, HNRNPU, IGF2BP1, ILF3, PABPC1, PCBP2, PTBP2, STAU1, STAU2, SYNCRIP and YBX1. Identified in a IGF2BP1-dependent mRNP granule complex containing untranslated mRNAs. Interacts with DHX9, ELAVL2, HNRNPA2B1, HNRNPC, HNRNPH1, HNRNPU, IGF2BP2, ILF2, and YBX1. Interacts with FMR1. Component of a multisubunit autoregulatory RNP complex (ARC), at least composed of IGF2BP1, PABPC1 and CSDE1/UNR. Directly interacts with PABPC1. Component of a TAU mRNP complex, at least composed of IGF2BP1, ELAVL4 and G3BP. Interacts with ELAVL4 in an RNA-dependent manner. Associates with microtubules and polysomes. Interacts with AGO1 and AGO2. Interacts with ELAVL1 and MATR3. Interacts (via KH3 and KH4 domains) with SEPIN14P20 peptide RBRP; the interaction results in increased binding of IGF2BP1 to N6-methyladenosine (m6A)-containing mRNAs. In terms of processing, phosphorylated at Ser-181 by mTORC2 cotranslationally, promoting binding to the 3'-UTR of IGF2 mRNA. As to expression, mainly expressed in the embryo, including in fetal liver, fetal lung, fetal kidney, fetal thymus (at protein level). Also expressed follicles of ovary, as well as in gonocytes of testis, spermatogonia, semen, oocytes and placenta (at protein level). Expressed in various cancers, including testis and lung cancers (at protein level), as well as kidney, prostate and trachea cancers.

It localises to the nucleus. Its subcellular location is the cytoplasm. The protein localises to the perinuclear region. The protein resides in the P-body. It is found in the stress granule. It localises to the cell projection. Its subcellular location is the lamellipodium. The protein localises to the dendrite. The protein resides in the dendritic spine. It is found in the growth cone. It localises to the filopodium. Its subcellular location is the axon. Functionally, RNA-binding factor that recruits target transcripts to cytoplasmic protein-RNA complexes (mRNPs). This transcript 'caging' into mRNPs allows mRNA transport and transient storage. It also modulates the rate and location at which target transcripts encounter the translational apparatus and shields them from endonuclease attacks or microRNA-mediated degradation. Preferentially binds to N6-methyladenosine (m6A)-containing mRNAs and increases their stability. Plays a direct role in the transport and translation of transcripts required for axonal regeneration in adult sensory neurons. Regulates localized beta-actin/ACTB mRNA translation, a crucial process for cell polarity, cell migration and neurite outgrowth. Co-transcriptionally associates with the ACTB mRNA in the nucleus. This binding involves a conserved 54-nucleotide element in the ACTB mRNA 3'-UTR, known as the 'zipcode'. The RNP thus formed is exported to the cytoplasm, binds to a motor protein and is transported along the cytoskeleton to the cell periphery. During transport, prevents ACTB mRNA from being translated into protein. When the RNP complex reaches its destination near the plasma membrane, IGF2BP1 is phosphorylated. This releases the mRNA, allowing ribosomal 40S and 60S subunits to assemble and initiate ACTB protein synthesis. Monomeric ACTB then assembles into the subcortical actin cytoskeleton. During neuronal development, key regulator of neurite outgrowth, growth cone guidance and neuronal cell migration, presumably through the spatiotemporal fine tuning of protein synthesis, such as that of ACTB. May regulate mRNA transport to activated synapses. Binds to and stabilizes ABCB1/MDR-1 mRNA. During interstinal wound repair, interacts with and stabilizes PTGS2 transcript. PTGS2 mRNA stabilization may be crucial for colonic mucosal wound healing. Binds to the 3'-UTR of IGF2 mRNA by a mechanism of cooperative and sequential dimerization and regulates IGF2 mRNA subcellular localization and translation. Binds to MYC mRNA, in the coding region instability determinant (CRD) of the open reading frame (ORF), hence preventing MYC cleavage by endonucleases and possibly microRNA targeting to MYC-CRD. Binding to MYC mRNA is enhanced by m6A-modification of the CRD. Binds to the 3'-UTR of CD44 mRNA and stabilizes it, hence promotes cell adhesion and invadopodia formation in cancer cells. Binds to the oncofetal H19 transcript and to the neuron-specific TAU mRNA and regulates their localizations. Binds to and stabilizes BTRC/FBW1A mRNA. Binds to the adenine-rich autoregulatory sequence (ARS) located in PABPC1 mRNA and represses its translation. PABPC1 mRNA-binding is stimulated by PABPC1 protein. Prevents BTRC/FBW1A mRNA degradation by disrupting microRNA-dependent interaction with AGO2. Promotes the directed movement of tumor-derived cells by fine-tuning intracellular signaling networks. Binds to MAPK4 3'-UTR and inhibits its translation. Interacts with PTEN transcript open reading frame (ORF) and prevents mRNA decay. This combined action on MAPK4 (down-regulation) and PTEN (up-regulation) antagonizes HSPB1 phosphorylation, consequently it prevents G-actin sequestration by phosphorylated HSPB1, allowing F-actin polymerization. Hence enhances the velocity of cell migration and stimulates directed cell migration by PTEN-modulated polarization. Interacts with Hepatitis C virus (HCV) 5'-UTR and 3'-UTR and specifically enhances translation at the HCV IRES, but not 5'-cap-dependent translation, possibly by recruiting eIF3. Interacts with HIV-1 GAG protein and blocks the formation of infectious HIV-1 particles. Reduces HIV-1 assembly by inhibiting viral RNA packaging, as well as assembly and processing of GAG protein on cellular membranes. During cellular stress, such as oxidative stress or heat shock, stabilizes target mRNAs that are recruited to stress granules, including CD44, IGF2, MAPK4, MYC, PTEN, RAPGEF2 and RPS6KA5 transcripts. This chain is Insulin-like growth factor 2 mRNA-binding protein 1 (IGF2BP1), found in Homo sapiens (Human).